Reading from the N-terminus, the 423-residue chain is Glutamyl-tRNA(Gln) amidotransferase subunit A (423 aa).

Residues 1-20 (MSHNAFITEETIEPTDDGPL) form a disordered region. A compositionally biased stretch (acidic residues) spans 10–19 (ETIEPTDDGP). Catalysis depends on charge relay system residues Lys-28 and Ser-103. Residues 75-108 (EFGMGTTTETSAFGPTENPAAEGRVPGGSSGGSA) form a disordered region. Catalysis depends on Ser-127, which acts as the Acyl-ester intermediate. Residues 183–206 (DERDGTTREPPAGQPTYADAADGD) form a disordered region.

The protein belongs to the amidase family. GatA subfamily. Heterotrimer of A, B and C subunits.

It catalyses the reaction L-glutamyl-tRNA(Gln) + L-glutamine + ATP + H2O = L-glutaminyl-tRNA(Gln) + L-glutamate + ADP + phosphate + H(+). Allows the formation of correctly charged Gln-tRNA(Gln) through the transamidation of misacylated Glu-tRNA(Gln) in organisms which lack glutaminyl-tRNA synthetase. The reaction takes place in the presence of glutamine and ATP through an activated gamma-phospho-Glu-tRNA(Gln). The chain is Glutamyl-tRNA(Gln) amidotransferase subunit A from Natronomonas pharaonis (strain ATCC 35678 / DSM 2160 / CIP 103997 / JCM 8858 / NBRC 14720 / NCIMB 2260 / Gabara) (Halobacterium pharaonis).